Reading from the N-terminus, the 189-residue chain is Autophagy receptor ATG45 (189 aa).

The segment at 1 to 96 is binds glycogen; that stretch reads MSNFLLVIPE…TNNILHFKDN (96 aa). Residues 97 to 189 are required for sequestration into autophagosomes; that stretch reads EASQLMDIPL…AKKVKTYWNK (93 aa). Serine 107 is modified (phosphoserine). The ATG8 interaction motif (AIM) signature appears at 127–130; it reads YVNL. Serine 172 is modified (phosphoserine). Positions 176 to 187 are may facilitate interactions with the autophagosome membrane; that stretch reads LMCIAKKVKTYW.

As to quaternary structure, interacts with ATG8.

Its subcellular location is the cytoplasm. The protein resides in the cytosol. The protein localises to the cytoplasmic vesicle. It localises to the autophagosome. In terms of biological role, autophagy receptor for glycogen that facilitates the sequestration of glycogen assemblies into autophagosomes as part of bulk autophagy; the autophagy of glycogen (glycophagy) is stimulated during prolonged nitrogen starvation and during sporulation. The protein is Autophagy receptor ATG45 of Saccharomyces cerevisiae (strain ATCC 204508 / S288c) (Baker's yeast).